A 448-amino-acid chain; its full sequence is Tubulin beta chain (448 aa).

Positions 11, 69, 138, 142, 143, 144, 204, and 226 each coordinate GTP. E69 contributes to the Mg(2+) binding site. The interval 425–448 (YQDASISEGEEEYLEEEEPLEHEE) is disordered. Positions 432 to 448 (EGEEEYLEEEEPLEHEE) are enriched in acidic residues.

The protein belongs to the tubulin family. In terms of assembly, dimer of alpha and beta chains. A typical microtubule is a hollow water-filled tube with an outer diameter of 25 nm and an inner diameter of 15 nM. Alpha-beta heterodimers associate head-to-tail to form protofilaments running lengthwise along the microtubule wall with the beta-tubulin subunit facing the microtubule plus end conferring a structural polarity. Microtubules usually have 13 protofilaments but different protofilament numbers can be found in some organisms and specialized cells. Mg(2+) serves as cofactor.

The protein localises to the cytoplasm. Its subcellular location is the cytoskeleton. In terms of biological role, tubulin is the major constituent of microtubules, a cylinder consisting of laterally associated linear protofilaments composed of alpha- and beta-tubulin heterodimers. Microtubules grow by the addition of GTP-tubulin dimers to the microtubule end, where a stabilizing cap forms. Below the cap, tubulin dimers are in GDP-bound state, owing to GTPase activity of alpha-tubulin. The protein is Tubulin beta chain (benR) of Aspergillus parasiticus.